We begin with the raw amino-acid sequence, 113 residues long: U11-theraphotoxin-Hhn1a (113 aa).

An N-terminal signal peptide occupies residues 1-21 (MNTVRVTFLLVFVLAVSLGQA). A propeptide spanning residues 22 to 74 (DKDENRMEMQEKTEQGKGYLDFAENLLPQKLEELEAKLLEEDSEESRNSRQKR) is cleaved from the precursor. Basic and acidic residues predominate over residues 59 to 69 (LLEEDSEESRN). The disordered stretch occupies residues 59–83 (LLEEDSEESRNSRQKRCIGEGVPCD). Intrachain disulfides connect cysteine 75–cysteine 90, cysteine 82–cysteine 95, and cysteine 89–cysteine 110.

The protein belongs to the neurotoxin 14 (magi-1) family. 01 (HNTX-16) subfamily. As to expression, expressed by the venom gland.

It localises to the secreted. In terms of biological role, probable ion channel inhibitor. This chain is U11-theraphotoxin-Hhn1a, found in Cyriopagopus hainanus (Chinese bird spider).